A 401-amino-acid polypeptide reads, in one-letter code: Dual-specificity RNA methyltransferase RlmN (401 aa).

Catalysis depends on Glu-114, which acts as the Proton acceptor. Residues 120–365 (DKTRGTLCVS…TMVRRTRGDD (246 aa)) enclose the Radical SAM core domain. Cys-127 and Cys-370 are joined by a disulfide. Positions 134, 138, and 141 each coordinate [4Fe-4S] cluster. S-adenosyl-L-methionine-binding positions include 187–188 (GE), Ser-219, 241–243 (SLH), and Asn-327. The active-site S-methylcysteine intermediate is the Cys-370.

The protein belongs to the radical SAM superfamily. RlmN family. It depends on [4Fe-4S] cluster as a cofactor.

The protein resides in the cytoplasm. It carries out the reaction adenosine(2503) in 23S rRNA + 2 reduced [2Fe-2S]-[ferredoxin] + 2 S-adenosyl-L-methionine = 2-methyladenosine(2503) in 23S rRNA + 5'-deoxyadenosine + L-methionine + 2 oxidized [2Fe-2S]-[ferredoxin] + S-adenosyl-L-homocysteine. The enzyme catalyses adenosine(37) in tRNA + 2 reduced [2Fe-2S]-[ferredoxin] + 2 S-adenosyl-L-methionine = 2-methyladenosine(37) in tRNA + 5'-deoxyadenosine + L-methionine + 2 oxidized [2Fe-2S]-[ferredoxin] + S-adenosyl-L-homocysteine. Functionally, specifically methylates position 2 of adenine 2503 in 23S rRNA and position 2 of adenine 37 in tRNAs. m2A2503 modification seems to play a crucial role in the proofreading step occurring at the peptidyl transferase center and thus would serve to optimize ribosomal fidelity. In Stenotrophomonas maltophilia (strain R551-3), this protein is Dual-specificity RNA methyltransferase RlmN.